We begin with the raw amino-acid sequence, 131 residues long: Methylglyoxal synthase (131 aa).

The MGS-like domain occupies 1 to 131; the sequence is MKIALIAHDK…GDLDYRKLRK (131 aa). Substrate is bound by residues H8, K12, 34–37, and 54–55; these read TGTT and SG. D60 (proton donor/acceptor) is an active-site residue. H87 lines the substrate pocket.

Belongs to the methylglyoxal synthase family.

It carries out the reaction dihydroxyacetone phosphate = methylglyoxal + phosphate. Catalyzes the formation of methylglyoxal from dihydroxyacetone phosphate. This chain is Methylglyoxal synthase, found in Bacillus cereus (strain AH820).